A 94-amino-acid polypeptide reads, in one-letter code: Pyrimidine/purine nucleoside phosphorylase (94 aa).

Belongs to the nucleoside phosphorylase PpnP family.

The enzyme catalyses a purine D-ribonucleoside + phosphate = a purine nucleobase + alpha-D-ribose 1-phosphate. It carries out the reaction adenosine + phosphate = alpha-D-ribose 1-phosphate + adenine. The catalysed reaction is cytidine + phosphate = cytosine + alpha-D-ribose 1-phosphate. It catalyses the reaction guanosine + phosphate = alpha-D-ribose 1-phosphate + guanine. The enzyme catalyses inosine + phosphate = alpha-D-ribose 1-phosphate + hypoxanthine. It carries out the reaction thymidine + phosphate = 2-deoxy-alpha-D-ribose 1-phosphate + thymine. The catalysed reaction is uridine + phosphate = alpha-D-ribose 1-phosphate + uracil. It catalyses the reaction xanthosine + phosphate = alpha-D-ribose 1-phosphate + xanthine. Catalyzes the phosphorolysis of diverse nucleosides, yielding D-ribose 1-phosphate and the respective free bases. Can use uridine, adenosine, guanosine, cytidine, thymidine, inosine and xanthosine as substrates. Also catalyzes the reverse reactions. The protein is Pyrimidine/purine nucleoside phosphorylase of Salmonella typhimurium (strain LT2 / SGSC1412 / ATCC 700720).